The following is a 145-amino-acid chain: D-aminoacyl-tRNA deacylase (145 aa).

The short motif at 137–138 (GP) is the Gly-cisPro motif, important for rejection of L-amino acids element.

Belongs to the DTD family. As to quaternary structure, homodimer.

The protein resides in the cytoplasm. It catalyses the reaction glycyl-tRNA(Ala) + H2O = tRNA(Ala) + glycine + H(+). The catalysed reaction is a D-aminoacyl-tRNA + H2O = a tRNA + a D-alpha-amino acid + H(+). An aminoacyl-tRNA editing enzyme that deacylates mischarged D-aminoacyl-tRNAs. Also deacylates mischarged glycyl-tRNA(Ala), protecting cells against glycine mischarging by AlaRS. Acts via tRNA-based rather than protein-based catalysis; rejects L-amino acids rather than detecting D-amino acids in the active site. By recycling D-aminoacyl-tRNA to D-amino acids and free tRNA molecules, this enzyme counteracts the toxicity associated with the formation of D-aminoacyl-tRNA entities in vivo and helps enforce protein L-homochirality. This chain is D-aminoacyl-tRNA deacylase, found in Cronobacter sakazakii (strain ATCC BAA-894) (Enterobacter sakazakii).